An 84-amino-acid chain; its full sequence is Hirudin-HM2 (84 aa).

Residues 1 to 20 form the signal peptide; it reads MFSLKLFVVFLAVCICVSQA. The interval 21–23 is interaction with thrombin active site; sequence VSY. 3 disulfide bridges follow: cysteine 26-cysteine 34, cysteine 36-cysteine 48, and cysteine 42-cysteine 57. The tract at residues 53–84 is disordered; that stretch reads SGNQCVHGEGTPKPKSQTEGDFEEIPDEDILN. Residue threonine 63 is glycosylated (O-linked (GalNAc...) threonine). Residues 72 to 84 show a composition bias toward acidic residues; the sequence is GDFEEIPDEDILN. The interaction with fibrinogen-binding exosite of thrombin stretch occupies residues 73–84; that stretch reads DFEEIPDEDILN.

Belongs to the protease inhibitor I14 (hirudin) family.

It localises to the secreted. Hirudin is a potent thrombin-specific protease inhibitor. It forms a stable non-covalent complex with alpha-thrombin, thereby abolishing its ability to cleave fibrinogen. The sequence is that of Hirudin-HM2 from Hirudinaria manillensis (Asian medical leech).